The following is a 315-amino-acid chain: Shiga-like toxin 1 subunit A (315 aa).

Positions 1–22 are cleaved as a signal peptide; the sequence is MKIIIFRVLTFFFVIFSVNVVA. The interval 23–273 is A1; it reads KEFTLDFSTA…CHHHASRVAR (251 aa). Residue E189 is part of the active site. A disulfide bridge connects residues C264 and C283. The interval 274 to 315 is A2; sequence MASDEFPSMCPADGRVRGITHNKILWDSSTLGAILMRRTISS.

This sequence belongs to the ribosome-inactivating protein family. Shiga-like toxin contains a single subunit A and five copies of subunit B.

The protein resides in the secreted. The catalysed reaction is Endohydrolysis of the N-glycosidic bond at one specific adenosine on the 28S rRNA.. Functionally, the A subunit is responsible for inhibiting protein synthesis through the catalytic inactivation of 60S ribosomal subunits. After endocytosis, the A subunit is cleaved by furin in two fragments, A1 and A2: A1 is the catalytically active fragment, and A2 is essential for holotoxin assembly with the B subunits. This is Shiga-like toxin 1 subunit A (stxA) from Escherichia coli (Bacteriophage H19B).